The sequence spans 180 residues: MGDPKRQRKKYETPPHPWIKERLDRERVLMDKYELKNKKELWKHETQLKNFRRRARRLLAARGKQAEIEREQLLSRLKRLGLLPEDAVLDDVLSLTVEDILERRLQTIVYKKGLARTMRQARQLIVHGHIEVNGQIIRSPSYLVLKEEEDKITYARTSPFANPQHPERMMIEKAKQGGEA.

In terms of domain architecture, S4 RNA-binding spans 103–174 (RRLQTIVYKK…HPERMMIEKA (72 aa)).

Belongs to the universal ribosomal protein uS4 family. In terms of assembly, part of the 30S ribosomal subunit. Contacts protein S5. The interaction surface between S4 and S5 is involved in control of translational fidelity.

Its function is as follows. One of the primary rRNA binding proteins, it binds directly to 16S rRNA where it nucleates assembly of the body of the 30S subunit. In terms of biological role, with S5 and S12 plays an important role in translational accuracy. The chain is Small ribosomal subunit protein uS4 from Pyrococcus horikoshii (strain ATCC 700860 / DSM 12428 / JCM 9974 / NBRC 100139 / OT-3).